The primary structure comprises 148 residues: MEVILLEKITNLGNLGDKVNVKSGYARNFLLPQGKATAATAENVAAFEARRVELERLAAEKRSSAESRAAQLNELEITITATAGDEGKLFGSIGTADIADALTAAGLDVAKSEVRLPNGTIRQTGEYDVALHLHTDVEASIRLVVVGG.

The protein belongs to the bacterial ribosomal protein bL9 family.

In terms of biological role, binds to the 23S rRNA. The sequence is that of Large ribosomal subunit protein bL9 from Azotobacter vinelandii (strain DJ / ATCC BAA-1303).